The chain runs to 63 residues: Large ribosomal subunit protein bL28 (63 aa).

This sequence belongs to the bacterial ribosomal protein bL28 family.

This is Large ribosomal subunit protein bL28 from Geobacter sulfurreducens (strain ATCC 51573 / DSM 12127 / PCA).